The primary structure comprises 363 residues: Neurogenic differentiation factor 2 (363 aa).

The tract at residues 1-116 (MLTRLFKEPS…VRRQKANARE (116 aa)) is disordered. A compositionally biased stretch (basic and acidic residues) spans 28-44 (EDSKTKDEEQERCRLGD). The span at 64 to 83 (AGEEDYDEDVDEDDCGEEGD) shows a compositional bias: acidic residues. The segment covering 87 to 98 (PKKRGPKKRKMT) has biased composition (basic residues). Residues 93–99 (KKRKMTP) carry the Nuclear localization signal motif. Residues 107 to 159 (VRRQKANARERTRMHDLNSALDNLLKVVPCYSKTQKLSKIETLRLAKNYIWAL) enclose the bHLH domain.

As to quaternary structure, efficient DNA binding requires dimerization with another bHLH protein. In adult, expressed strongly in brain and more weakly in skin, muscle, eye and ovary.

It localises to the nucleus. Its function is as follows. Transcriptional regulator. Appears to mediate neuronal differentiation. This chain is Neurogenic differentiation factor 2, found in Danio rerio (Zebrafish).